Here is a 249-residue protein sequence, read N- to C-terminus: Proteasome activator complex subunit 1 (249 aa).

Residues 59–102 (APLDIPVPDPVKEKEKEERKKQQEKEEKEEKKKGDEDDKGPPCG) are disordered. Over residues 68–98 (PVKEKEKEERKKQQEKEEKEEKKKGDEDDKG) the composition is skewed to basic and acidic residues.

This sequence belongs to the PA28 family. As to quaternary structure, heterodimer of PSME1 and PSME2, which forms a hexameric ring. PSME1 can form homoheptamers.

Functionally, implicated in immunoproteasome assembly and required for efficient antigen processing. The PA28 activator complex enhances the generation of class I binding peptides by altering the cleavage pattern of the proteasome. The chain is Proteasome activator complex subunit 1 (Psme1) from Mus musculus (Mouse).